We begin with the raw amino-acid sequence, 255 residues long: Complement C1q-like protein 3 (255 aa).

The first 20 residues, 1 to 20 (MVLLLVILIPVLVSSAGTSA), serve as a signal peptide directing secretion. The segment at 39–109 (KAPSTAATPD…GLPGPPGAPG (71 aa)) is disordered. Residues 61-111 (GPKGEAGRPGKAGPRGPPGEPGPPGPMGPPGEKGEPGRQGLPGPPGAPGLN) enclose the Collagen-like domain. A compositionally biased stretch (pro residues) spans 75-89 (RGPPGEPGPPGPMGP). The C1q domain maps to 122-255 (STVPKIAFYA…TFSGFIIYAD (134 aa)).

In terms of assembly, forms homooligomers. Interacts with ADGRB3. Interacts with C1QL2 and C1QL4, when proteins are coexpressed; this interaction does not occur after secretion. As to expression, highly expressed in adipose tissue, with expression levels at least 2 orders of magnitude higher than in other tissues, including brain and kidney.

It localises to the secreted. Its function is as follows. May regulate the number of excitatory synapses that are formed on hippocampus neurons. Has no effect on inhibitory synapses. Plays a role in glucose homeostasis. Via AMPK signaling pathway, stimulates glucose uptake in adipocytes, myotubes and hepatocytes and enhances insulin-stimulated glucose uptake. In a hepatoma cell line, reduces the expression of gluconeogenic enzymes G6PC1 and PCK1 and hence decreases de novo glucose production. This is Complement C1q-like protein 3 (C1QL3) from Homo sapiens (Human).